Here is a 91-residue protein sequence, read N- to C-terminus: MTAQVDRYVSFKGIDWVGRSREIFARLQSHIDQANSPFWPYFTRQRKLAHSQGLDDLRVLHNYLPTLRELLENMGDLKTLGMLEELEQICM.

The protein belongs to the CowN family.

Functionally, is required to sustain N(2)-dependent growth in the presence of low levels of carbon monoxide (CO). Probably acts by protecting the N(2) fixation ability of the nitrogenase complex, which is inactivated in the presence of CO. The protein is N(2)-fixation sustaining protein CowN of Beijerinckia indica subsp. indica (strain ATCC 9039 / DSM 1715 / NCIMB 8712).